The sequence spans 181 residues: Alkyl hydroperoxide reductase AhpD (181 aa).

The active-site Proton donor is the C131. C131 and C134 are disulfide-bonded. Residue C134 is the Cysteine sulfenic acid (-SOH) intermediate of the active site.

It belongs to the AhpD family.

The catalysed reaction is N(6)-[(R)-dihydrolipoyl]-L-lysyl-[lipoyl-carrier protein] + a hydroperoxide = N(6)-[(R)-lipoyl]-L-lysyl-[lipoyl-carrier protein] + an alcohol + H2O. Antioxidant protein with alkyl hydroperoxidase activity. Required for the reduction of the AhpC active site cysteine residues and for the regeneration of the AhpC enzyme activity. The protein is Alkyl hydroperoxide reductase AhpD of Bradyrhizobium sp. (strain BTAi1 / ATCC BAA-1182).